We begin with the raw amino-acid sequence, 526 residues long: Thymocyte selection-associated high mobility group box protein TOX (526 aa).

The span at 194 to 203 (NMGGTNVAHN) shows a compositional bias: polar residues. A disordered region spans residues 194–264 (NMGGTNVAHN…KKDPNEPQKP (71 aa)). A compositionally biased stretch (low complexity) spans 209–220 (GSKSATPSPSSS). Positions 228–245 (DASKINGGEKRPASDMGK) are enriched in basic and acidic residues. The Nuclear localization signal signature appears at 237 to 256 (KRPASDMGKKPKTPKKKKKK). The segment covering 246 to 256 (KPKTPKKKKKK) has biased composition (basic residues). Residues 261 to 329 (PQKPVSAYAL…EYLKQLAAYR (69 aa)) constitute a DNA-binding region (HMG box).

It belongs to the high motility group (HMG) box superfamily. In terms of assembly, interacts with HBO1 complex composed at least of KAT7/HBO1, ING4, MEAF6, and JADE2; this complex is involved in histone acetylation. Interacts with DNMT1, LEO1, PAF1, SAP130 and SIN3A; these interactors regulate chromatin remodeling. Interacts with an array of proteins involved in RNA processing and translation and DNA replication. In terms of tissue distribution, expressed in neurons of the subventricular zone (at protein level). Expressed in distinct subpopulations of thymocytes undergoing positive selection: double CD4-positive CD8-positive (DP) cells, CD4-positive CD8-low transitional cells and in single CD4-positive and CD8-positive cells (at protein level). Expressed in ILC progenitors and mature ILC subsets: ILC1, ILC2 and ILC3 (at protein level). Expressed in lymphoid tissue-inducer cells and bone marrow NK cell subsets. Abundant in thymus, liver and brain. Also detected in small intestine, spleen, stomach and testis. Highly expressed in tumor-infiltrating CD8-positive T cells (at protein level).

The protein localises to the nucleus. Its function is as follows. Transcriptional regulator with a major role in neural stem cell commitment and corticogenesis as well as in lymphoid cell development and lymphoid tissue organogenesis. Binds to GC-rich DNA sequences in the proximity of transcription start sites and may alter chromatin structure, modifying access of transcription factors to DNA. During cortical development, controls the neural stem cell pool by inhibiting the switch from proliferative to differentiating progenitors. Beyond progenitor cells, promotes neurite outgrowth in newborn neurons migrating to reach the cortical plate. May activate or repress critical genes for neural stem cell fate such as SOX2, EOMES and ROBO2. Plays an essential role in the development of lymphoid tissue-inducer (LTi) cells, a subset necessary for the formation of secondary lymphoid organs: peripheral lymph nodes and Peyer's patches. Acts as a developmental checkpoint and regulates thymocyte positive selection toward T cell lineage commitment. Required for the development of various T cell subsets, including CD4-positive helper T cells, CD8-positive cytotoxic T cells, regulatory T cells and CD1D-dependent natural killer T (NKT) cells. Required for the differentiation of common lymphoid progenitors (CMP) to innate lymphoid cells (ILC). May regulate the NOTCH-mediated gene program, promoting differentiation of the ILC lineage. Required at the progenitor phase of NK cell development in the bone marrow to specify NK cell lineage commitment. Upon chronic antigen stimulation, diverts T cell development by promoting the generation of exhaustive T cells, while suppressing effector and memory T cell programming. May regulate the expression of genes encoding inhibitory receptors such as PDCD1 and induce the exhaustion program, to prevent the overstimulation of T cells and activation-induced cell death. The chain is Thymocyte selection-associated high mobility group box protein TOX from Mus musculus (Mouse).